The sequence spans 238 residues: ATP-dependent dethiobiotin synthetase BioD (238 aa).

Position 13–18 (13–18) interacts with ATP; it reads DIGKTF. Thr17 serves as a coordination point for Mg(2+). Lys38 is a catalytic residue. Substrate is bound at residue Ser42. ATP contacts are provided by residues Asp55, 116–119, 209–211, and Asn216; these read EGSG and PRI. Positions 55 and 116 each coordinate Mg(2+).

Belongs to the dethiobiotin synthetase family. In terms of assembly, homodimer. It depends on Mg(2+) as a cofactor.

It is found in the cytoplasm. The enzyme catalyses (7R,8S)-7,8-diammoniononanoate + CO2 + ATP = (4R,5S)-dethiobiotin + ADP + phosphate + 3 H(+). Its pathway is cofactor biosynthesis; biotin biosynthesis; biotin from 7,8-diaminononanoate: step 1/2. Its function is as follows. Catalyzes a mechanistically unusual reaction, the ATP-dependent insertion of CO2 between the N7 and N8 nitrogen atoms of 7,8-diaminopelargonic acid (DAPA, also called 7,8-diammoniononanoate) to form a ureido ring. This Clostridium novyi (strain NT) protein is ATP-dependent dethiobiotin synthetase BioD.